The sequence spans 253 residues: Ribosomal RNA small subunit methyltransferase G (253 aa).

Residues Gly-84, Phe-89, 135-136 (AE), and Arg-154 each bind S-adenosyl-L-methionine. A disordered region spans residues 228 to 253 (TPAKYPRREGVPTHQPLFWKAKEQSR).

It belongs to the methyltransferase superfamily. RNA methyltransferase RsmG family.

It localises to the cytoplasm. Functionally, specifically methylates the N7 position of a guanine in 16S rRNA. The protein is Ribosomal RNA small subunit methyltransferase G of Deinococcus radiodurans (strain ATCC 13939 / DSM 20539 / JCM 16871 / CCUG 27074 / LMG 4051 / NBRC 15346 / NCIMB 9279 / VKM B-1422 / R1).